Here is a 950-residue protein sequence, read N- to C-terminus: Calcium-transporting ATPase 1 (950 aa).

Position 2 is an N-acetylserine (S2). Over 2–92 (SDNPFNASLL…SLFKKFLSNF (91 aa)) the chain is Cytoplasmic. Residues 93–111 (IEDRMILLLIGSAVVSLFM) form a helical membrane-spanning segment. Residues 112–116 (GNIDD) lie on the Lumenal side of the membrane. A helical transmembrane segment spans residues 117–133 (AVSITLAIFIVVTVGFV). The Cytoplasmic segment spans residues 134–288 (QEYRSEKSLE…LQLTMDKLGK (155 aa)). Position 227 is a phosphoserine (S227). The helical transmembrane segment at 289-309 (DLSLVSFIVIGMICLVGIIQG) threads the bilayer. Over 310–323 (RSWLEMFQISVSLA) the chain is Lumenal. Residues 324 to 344 (VAAIPEGLPIIVTVTLALGVL) traverse the membrane as a helical segment. Residues 345-814 (RMAKRKAIVR…KILTHDVMKR (470 aa)) lie on the Cytoplasmic side of the membrane. The active-site 4-aspartylphosphate intermediate is the D371. The chain crosses the membrane as a helical span at residues 815–835 (LLTTAACIIVGTVYIFVKEMA). Residues 836 to 844 (EDGKVTARD) lie on the Lumenal side of the membrane. The helical transmembrane segment at 845–862 (TTMTFTCFVFFDMFNALA) threads the bilayer. Topologically, residues 863-884 (CRHNTKSIFEIGFFTNKMFNYA) are cytoplasmic. Residues 885 to 905 (VGLSLLGQMCAIYIPFFQSIF) traverse the membrane as a helical segment. Topologically, residues 906–909 (KTEK) are lumenal. Residues 910–930 (LGISDILLLLLISSSVFIVDE) form a helical membrane-spanning segment. Topologically, residues 931-950 (LRKLWTRKKNEEDSTYFSNV) are cytoplasmic.

This sequence belongs to the cation transport ATPase (P-type) (TC 3.A.3) family.

It is found in the golgi apparatus membrane. It carries out the reaction Ca(2+)(in) + ATP + H2O = Ca(2+)(out) + ADP + phosphate + H(+). In terms of biological role, this magnesium-dependent enzyme catalyzes the hydrolysis of ATP coupled with the transport of calcium. Has a role in the secretory pathway. In Saccharomyces cerevisiae (strain ATCC 204508 / S288c) (Baker's yeast), this protein is Calcium-transporting ATPase 1 (PMR1).